A 102-amino-acid polypeptide reads, in one-letter code: MQKARIKLASTNVRSLEEVANQIKQIAERTGVRMSGPIPLPTKRIRIVTRKSPDGEGSATFDRWELRIHKRLIDIEADERAMRQIMRIRVPEDVTIEIELIS.

It belongs to the universal ribosomal protein uS10 family. In terms of assembly, part of the 30S ribosomal subunit.

Its function is as follows. Involved in the binding of tRNA to the ribosomes. This Pyrococcus abyssi (strain GE5 / Orsay) protein is Small ribosomal subunit protein uS10.